The chain runs to 508 residues: ATP synthase subunit alpha, chloroplastic (508 aa).

171–178 (GDRQTGKT) contributes to the ATP binding site.

Belongs to the ATPase alpha/beta chains family. As to quaternary structure, F-type ATPases have 2 components, CF(1) - the catalytic core - and CF(0) - the membrane proton channel. CF(1) has five subunits: alpha(3), beta(3), gamma(1), delta(1), epsilon(1). CF(0) has four main subunits: a, b, b' and c.

It localises to the plastid. Its subcellular location is the chloroplast thylakoid membrane. It catalyses the reaction ATP + H2O + 4 H(+)(in) = ADP + phosphate + 5 H(+)(out). In terms of biological role, produces ATP from ADP in the presence of a proton gradient across the membrane. The alpha chain is a regulatory subunit. This chain is ATP synthase subunit alpha, chloroplastic, found in Gnetum parvifolium (Small-leaved jointfir).